A 200-amino-acid polypeptide reads, in one-letter code: Glycerol-3-phosphate acyltransferase (200 aa).

5 helical membrane passes run 2-22, 51-71, 84-104, 114-134, and 159-179; these read FNIS…AVIV, KAAA…VLLA, AIAA…FFGF, LGVL…IWLV, and FFMP…LVLF.

This sequence belongs to the PlsY family. As to quaternary structure, probably interacts with PlsX.

Its subcellular location is the cell inner membrane. It carries out the reaction an acyl phosphate + sn-glycerol 3-phosphate = a 1-acyl-sn-glycero-3-phosphate + phosphate. The protein operates within lipid metabolism; phospholipid metabolism. Its function is as follows. Catalyzes the transfer of an acyl group from acyl-phosphate (acyl-PO(4)) to glycerol-3-phosphate (G3P) to form lysophosphatidic acid (LPA). This enzyme utilizes acyl-phosphate as fatty acyl donor, but not acyl-CoA or acyl-ACP. The chain is Glycerol-3-phosphate acyltransferase from Neisseria meningitidis serogroup C (strain 053442).